The chain runs to 354 residues: Green-sensitive opsin-3 (354 aa).

Residues 1 to 39 (MSGLNGFEGDNFYIPMSNRTGLVRDPFVYEQYYLAEPWQ) lie on the Extracellular side of the membrane. Residue asparagine 18 is glycosylated (N-linked (GlcNAc...) asparagine). A helical transmembrane segment spans residues 40–64 (FKLLACYMFFLICLGLPINGFTLFV). Topologically, residues 65–76 (TAQHKKLQQPLN) are cytoplasmic. A helical transmembrane segment spans residues 77-102 (FILVNLAVAGMIMVCFGFTITISSAV). The Extracellular segment spans residues 103 to 116 (NGYFYFGPTACAIE). Cysteine 113 and cysteine 190 are disulfide-bonded. The helical transmembrane segment at 117-136 (GFMATLGGEVALWSLVVLAI) threads the bilayer. The Cytoplasmic portion of the chain corresponds to 137–155 (ERYIVVCKPMGSFKFSASH). Residues 156 to 179 (ALGGIGFTWFMAMTCAAPPLVGWS) form a helical membrane-spanning segment. Over 180 to 205 (RYIPEGLQCSCGPDYYTLNPKYNNES) the chain is Extracellular. Asparagine 203 carries N-linked (GlcNAc...) asparagine glycosylation. A helical transmembrane segment spans residues 206–233 (YVIYMFVVHFIVPVTVIFFTYGRLVCTV). Residues 234–255 (KSAAAAQQDSASTQKAEKEVTR) lie on the Cytoplasmic side of the membrane. A helical membrane pass occupies residues 256-279 (MVILMVVGFLVAWTPYATVAAWIF). Over 280–287 (FNKGAAFT) the chain is Extracellular. The chain crosses the membrane as a helical span at residues 288 to 312 (AQFMAVPAFFSKSSALFNPIIYVLL). Lysine 299 is subject to N6-(retinylidene)lysine. At 313–354 (NKQFRNCMLTTLFCGKNPLGDEESSTVSTKTEVSTVSSVSPA) the chain is on the cytoplasmic side.

This sequence belongs to the G-protein coupled receptor 1 family. Opsin subfamily. In terms of tissue distribution, the color pigments are found in the cone photoreceptor cells.

Its subcellular location is the membrane. Visual pigments are the light-absorbing molecules that mediate vision. They consist of an apoprotein, opsin, covalently linked to cis-retinal. In Psalidodon fasciatus (Banded astyanax), this protein is Green-sensitive opsin-3 (RH11).